Here is a 214-residue protein sequence, read N- to C-terminus: Probable transaldolase (214 aa).

Catalysis depends on lysine 83, which acts as the Schiff-base intermediate with substrate.

Belongs to the transaldolase family. Type 3B subfamily.

Its subcellular location is the cytoplasm. The catalysed reaction is D-sedoheptulose 7-phosphate + D-glyceraldehyde 3-phosphate = D-erythrose 4-phosphate + beta-D-fructose 6-phosphate. The protein operates within carbohydrate degradation; pentose phosphate pathway; D-glyceraldehyde 3-phosphate and beta-D-fructose 6-phosphate from D-ribose 5-phosphate and D-xylulose 5-phosphate (non-oxidative stage): step 2/3. Its function is as follows. Transaldolase is important for the balance of metabolites in the pentose-phosphate pathway. This is Probable transaldolase from Citrifermentans bemidjiense (strain ATCC BAA-1014 / DSM 16622 / JCM 12645 / Bem) (Geobacter bemidjiensis).